We begin with the raw amino-acid sequence, 878 residues long: Alanine--tRNA ligase (878 aa).

Zn(2+) is bound by residues H566, H570, C668, and H672.

It belongs to the class-II aminoacyl-tRNA synthetase family. The cofactor is Zn(2+).

It localises to the cytoplasm. The catalysed reaction is tRNA(Ala) + L-alanine + ATP = L-alanyl-tRNA(Ala) + AMP + diphosphate. Catalyzes the attachment of alanine to tRNA(Ala) in a two-step reaction: alanine is first activated by ATP to form Ala-AMP and then transferred to the acceptor end of tRNA(Ala). Also edits incorrectly charged Ser-tRNA(Ala) and Gly-tRNA(Ala) via its editing domain. In Bacillus subtilis (strain 168), this protein is Alanine--tRNA ligase.